The chain runs to 362 residues: Very-long-chain (3R)-3-hydroxyacyl-CoA dehydratase (362 aa).

The Cytoplasmic segment spans residues 1–149 (MADCSLRPHV…DPFKHLKKGY (149 aa)). The 90-residue stretch at 5–94 (SLRPHVHWAQ…KESSWWERLT (90 aa)) folds into the CS domain. The stretch at 111 to 135 (LDESDAEMELKEKEEEKINKMKIES) forms a coiled coil. Residues 150-170 (LIMYNLVQFLGFSWIFVNMTV) traverse the membrane as a helical segment. Residues 171–189 (RLFILGKDSFYDTFHTIAD) are Lumenal-facing. Residues 190 to 210 (MMYFCQTLALMEILNSLIGLV) traverse the membrane as a helical segment. Residues 211–212 (RS) are Cytoplasmic-facing. Residues 213 to 233 (PLIPAVIQVFGRNFILFVVLG) traverse the membrane as a helical segment. Over 234-242 (SLEEMQSKA) the chain is Lumenal. A helical membrane pass occupies residues 243–263 (VVFFLFYFWSIIELFRYPYYM). Topologically, residues 264–282 (LSCMGIEWKPLTWLRYTSW) are cytoplasmic. Residues 283–303 (IPLYPLGGLAEAVCLIQSIPI) traverse the membrane as a helical segment. Residues tyrosine 286 and glutamate 293 contribute to the active site. The Lumenal segment spans residues 304 to 319 (FSETGKFSLGLPNPLN). A helical membrane pass occupies residues 320-340 (VTIQFSFLLQMYLIALFLGLF). Residues 341–362 (VNFRYLYKQRKQHLGPKKRKMK) are Cytoplasmic-facing.

Belongs to the very long-chain fatty acids dehydratase HACD family.

The protein resides in the endoplasmic reticulum membrane. The enzyme catalyses a very-long-chain (3R)-3-hydroxyacyl-CoA = a very-long-chain (2E)-enoyl-CoA + H2O. The catalysed reaction is (3R)-hydroxyhexadecanoyl-CoA = (2E)-hexadecenoyl-CoA + H2O. Its pathway is lipid metabolism; fatty acid biosynthesis. Functionally, catalyzes the third of the four reactions of the long-chain fatty acids elongation cycle. This endoplasmic reticulum-bound enzymatic process, allows the addition of two carbons to the chain of long- and very long-chain fatty acids/VLCFAs per cycle. This enzyme catalyzes the dehydration of the 3-hydroxyacyl-CoA intermediate into trans-2,3-enoyl-CoA, within each cycle of fatty acid elongation. Thereby, it participates in the production of VLCFAs of different chain lengths that are involved in multiple biological processes as precursors of membrane lipids and lipid mediators. Involved in Rac1-signaling pathways leading to the modulation of gene expression. The sequence is that of Very-long-chain (3R)-3-hydroxyacyl-CoA dehydratase from Gallus gallus (Chicken).